The primary structure comprises 94 residues: UPF0235 protein TK0768 (94 aa).

This sequence belongs to the UPF0235 family.

This is UPF0235 protein TK0768 from Thermococcus kodakarensis (strain ATCC BAA-918 / JCM 12380 / KOD1) (Pyrococcus kodakaraensis (strain KOD1)).